The chain runs to 216 residues: MSEAYFRVESGALGPEENFLSLDDILMSHEKLPVRTETAMPRLGAFFLERSAGAETDNAVPQGSKLELPLWLAKGLFDNKRRILSVELPKIYQEGWRTVFSADPNVVDLHKMGPHFYGFGSQLLHFDSPENADISQSLLQTFIGRFRRIMDSSQNAYNEDTSALVARLDEMERGLFQIGQNGLNDFQCWEKGQASQITASNLVQNYKKRKFTDMED.

Positions 1 to 16 (MSEAYFRVESGALGPE) are not essential for folding and stability of GINS complex, but may regulate accessibility to the central complex pore.

The protein belongs to the GINS3/PSF3 family. Component of the GINS complex which is a heterotetramer of GINS1, GINS2, GINS3 and GINS4. Forms a stable subcomplex with GINS2. GINS complex interacts with DNA primase in vitro. Component of the CMG helicase complex, a hexameric ring of related MCM2-7 subunits stabilized by CDC45 and the tetrameric GINS complex.

The protein resides in the nucleus. It is found in the chromosome. Functionally, required for correct functioning of the GINS complex, a complex that plays an essential role in the initiation of DNA replication, and progression of DNA replication forks. GINS complex is a core component of CDC45-MCM-GINS (CMG) helicase, the molecular machine that unwinds template DNA during replication, and around which the replisome is built. This is DNA replication complex GINS protein PSF3 (GINS3) from Pongo abelii (Sumatran orangutan).